A 236-amino-acid chain; its full sequence is Small ribosomal subunit protein uS2c (236 aa).

Belongs to the universal ribosomal protein uS2 family.

The protein localises to the plastid. Its subcellular location is the chloroplast. The protein is Small ribosomal subunit protein uS2c (rps2) of Lotus japonicus (Lotus corniculatus var. japonicus).